The primary structure comprises 472 residues: D-inositol 3-phosphate glycosyltransferase (472 aa).

Histidine 48 contacts 1D-myo-inositol 3-phosphate. Residues 54 to 55 and glycine 62 each bind UDP-N-acetyl-alpha-D-glucosamine; that span reads QP. 1D-myo-inositol 3-phosphate contacts are provided by residues 59 to 64, lysine 117, tyrosine 150, threonine 174, and arginine 194; that span reads DAGGMN. Residues arginine 282, lysine 287, and valine 348 each contribute to the UDP-N-acetyl-alpha-D-glucosamine site. Phenylalanine 357, arginine 358, and alanine 360 together coordinate Mg(2+). Residues glutamate 370 and glutamate 378 each coordinate UDP-N-acetyl-alpha-D-glucosamine. Residue threonine 384 participates in Mg(2+) binding.

It belongs to the glycosyltransferase group 1 family. MshA subfamily. In terms of assembly, homodimer.

It catalyses the reaction 1D-myo-inositol 3-phosphate + UDP-N-acetyl-alpha-D-glucosamine = 1D-myo-inositol 2-acetamido-2-deoxy-alpha-D-glucopyranoside 3-phosphate + UDP + H(+). Its function is as follows. Catalyzes the transfer of a N-acetyl-glucosamine moiety to 1D-myo-inositol 3-phosphate to produce 1D-myo-inositol 2-acetamido-2-deoxy-glucopyranoside 3-phosphate in the mycothiol biosynthesis pathway. The sequence is that of D-inositol 3-phosphate glycosyltransferase from Streptomyces griseus subsp. griseus (strain JCM 4626 / CBS 651.72 / NBRC 13350 / KCC S-0626 / ISP 5235).